A 113-amino-acid polypeptide reads, in one-letter code: Large ribosomal subunit protein bL19 (113 aa).

This sequence belongs to the bacterial ribosomal protein bL19 family.

This protein is located at the 30S-50S ribosomal subunit interface and may play a role in the structure and function of the aminoacyl-tRNA binding site. The polypeptide is Large ribosomal subunit protein bL19 (Carboxydothermus hydrogenoformans (strain ATCC BAA-161 / DSM 6008 / Z-2901)).